We begin with the raw amino-acid sequence, 425 residues long: Serine--tRNA ligase (425 aa).

231 to 233 provides a ligand contact to L-serine; that stretch reads TAE. Residue 262-264 coordinates ATP; sequence RSE. Glu-285 serves as a coordination point for L-serine. 349–352 lines the ATP pocket; the sequence is EISS. Ser-385 contributes to the L-serine binding site.

Belongs to the class-II aminoacyl-tRNA synthetase family. Type-1 seryl-tRNA synthetase subfamily. Homodimer. The tRNA molecule binds across the dimer.

It is found in the cytoplasm. The enzyme catalyses tRNA(Ser) + L-serine + ATP = L-seryl-tRNA(Ser) + AMP + diphosphate + H(+). It carries out the reaction tRNA(Sec) + L-serine + ATP = L-seryl-tRNA(Sec) + AMP + diphosphate + H(+). It functions in the pathway aminoacyl-tRNA biosynthesis; selenocysteinyl-tRNA(Sec) biosynthesis; L-seryl-tRNA(Sec) from L-serine and tRNA(Sec): step 1/1. In terms of biological role, catalyzes the attachment of serine to tRNA(Ser). Is also able to aminoacylate tRNA(Sec) with serine, to form the misacylated tRNA L-seryl-tRNA(Sec), which will be further converted into selenocysteinyl-tRNA(Sec). This Desulfosudis oleivorans (strain DSM 6200 / JCM 39069 / Hxd3) (Desulfococcus oleovorans) protein is Serine--tRNA ligase.